Reading from the N-terminus, the 106-residue chain is MYQTSPLSLFYFQVLVPKFLECFLCFPYHKISLVALLSFFYCQLQTNMIILLSQIKRFLYRQIMIALKIKAKKFWFIFKYFNVSCDARLFNELFYIFQTYVSVDSK.

The Cytoplasmic portion of the chain corresponds to 1 to 6; it reads MYQTSP. The helical transmembrane segment at 7–27 threads the bilayer; that stretch reads LSLFYFQVLVPKFLECFLCFP. Residues 28 to 32 are Extracellular-facing; the sequence is YHKIS. Residues 33–53 traverse the membrane as a helical segment; the sequence is LVALLSFFYCQLQTNMIILLS. Over 54–73 the chain is Cytoplasmic; the sequence is QIKRFLYRQIMIALKIKAKK. Residues 74–94 traverse the membrane as a helical segment; that stretch reads FWFIFKYFNVSCDARLFNELF. The Extracellular portion of the chain corresponds to 95 to 106; sequence YIFQTYVSVDSK.

Its subcellular location is the membrane. This is an uncharacterized protein from Saccharomyces cerevisiae (strain ATCC 204508 / S288c) (Baker's yeast).